Here is a 797-residue protein sequence, read N- to C-terminus: Plakophilin-3 (797 aa).

The interval 56–82 (QLGQQPRHNGAAEPEPEAETARGTSRG) is disordered. Arg81 is subject to Omega-N-methylarginine. A phosphoserine mark is found at Ser123, Ser180, and Ser183. The residue at position 195 (Tyr195) is a Phosphotyrosine; by SRC. 2 positions are modified to phosphoserine: Ser238 and Ser240. Position 250 is a phosphothreonine (Thr250). Residue Arg261 is modified to Omega-N-methylarginine. The segment at 283-288 (SLSLSL) is required for interaction with SFN. 4 positions are modified to phosphoserine: Ser285, Ser313, Ser314, and Ser331. Residues 294–724 (LPDVHGFNSY…AEVLVNIIAV (431 aa)) form a required for interaction with GSK3B region. ARM repeat units lie at residues 305–348 (SHRT…HKCY), 351–390 (AAAK…NLIY), 393–432 (ADNK…NLSS), 449–487 (TDLV…NLSS), 491–536 (ATRQ…NLSY), 596–637 (PKGL…NITA), 645–684 (VLSR…NLSR), and 689–730 (KDEM…NLVV). A required for binding to PKP2 mRNA region spans residues 516-797 (AGKCEDKSVE…GYRKEDFLGP (282 aa)).

It belongs to the beta-catenin family. In terms of assembly, found in a complex composed of CDH1, RAP1A and PKP3; PKP3 acts as a scaffold protein within the complex, the complex is required for CDH1 localization to mature desmosome cell junctions. Interacts with FXR1; the interaction facilitates the binding of PKP3 to PKP2 mRNA. Interacts (via ARM repeats) with GSK3B; the interaction may be involved in PKP3 protein degradation. Interacts with hyperphosphorylated and hypophosphorylated RB1; the interaction inhibits RB1 interaction with and repression of the transcription factor E2F1, potentially via sequestering RB1 to the cytoplasm. Interacts with CDKN1A; the interaction sequesters CDKN1A to the cytoplasm thereby repressing its role as an inhibitor of CDK4- and CDK6-driven RB1 phosphorylation. Interacts (via N-terminus) with SFN; the interaction maintains the cytoplasmic pool of PKP3, facilitates PKP3 exchange at desmosomes and restricts PKP3 localization to existing desmosome cell junctions. Interacts (via N-terminus) with JUP; the interaction is required for PKP3 localization to desmosome cell-cell junctions. Post-translationally, phosphorylated at Ser-285 when localized to the cytoplasm, PKP3 at desmosome cell junctions is not phosphorylated. Phosphorylation at Try-195 by SRC is induced by reactive oxygen species and potentially acts as a release mechanism from desmosome cell-cell junctions. As to expression, expressed in the epidermis of the skin, in squamous non-cornifying epithelial cells in the vagina, single layer epithelia of the duodenum and pancreas acini and non-epithelial dendritic reticulum cells of lymph node follicles (at protein level). In terms of tissue distribution, expressed in the oral cavity mucosa, epidermis and small intestine epithelium (at protein level). Expressed in the oral cavity mucosa and epithelial cells of the crypts and villi in the small intestine (at protein level). Expressed in the epidermis with more abundant expression found in the basal and low spinous cells (at protein level).

It localises to the nucleus. The protein resides in the cell junction. Its subcellular location is the desmosome. It is found in the cytoplasm. The protein localises to the cell membrane. It localises to the adherens junction. In terms of biological role, a component of desmosome cell-cell junctions which are required for positive regulation of cellular adhesion. Required for the localization of DSG2, DSP and PKP2 to mature desmosome junctions. May also play a role in the maintenance of DSG3 protein abundance in keratinocytes. Required for the formation of DSP-containing desmosome precursors in the cytoplasm during desmosome assembly. Also regulates the accumulation of CDH1 to mature desmosome junctions, via cAMP-dependent signaling and its interaction with activated RAP1A. Positively regulates the stabilization of PKP2 mRNA and therefore protein abundance, via its interaction with FXR1, may also regulate the protein abundance of DSP via the same mechanism. May also regulate the protein abundance of the desmosome component PKP1. Required for the organization of desmosome junctions at intercellular borders between basal keratinocytes of the epidermis, as a result plays a role in maintenance of the dermal barrier and regulation of the dermal inflammatory response. Required during epidermal keratinocyte differentiation for cell adherence at tricellular cell-cell contacts, via regulation of the timely formation of adherens junctions and desmosomes in a calcium-dependent manner, and may also play a role in the organization of the intracellular actin fiber belt. Acts as a negative regulator of the inflammatory response in hematopoietic cells of the skin and intestine, via modulation of proinflammatory cytokine production. Important for epithelial barrier maintenance in the intestine to reduce intestinal permeability, thereby plays a role in protection from intestinal-derived endotoxemia. Required for the development of hair follicles, via a role in the regulation of inner root sheaf length, correct alignment and anterior-posterior polarity of hair follicles. Promotes proliferation and cell-cycle G1/S phase transition of keratinocytes. Promotes E2F1-driven transcription of G1/S phase promoting genes by acting to release E2F1 from its inhibitory interaction with RB1, via sequestering RB1 and CDKN1A to the cytoplasm and thereby increasing CDK4- and CDK6-driven phosphorylation of RB1. May act as a scaffold protein to facilitate MAPK phosphorylation of RPS6KA protein family members and subsequently promote downstream EGFR signaling. May play a role in the positive regulation of transcription of Wnt-mediated TCF-responsive target genes. The sequence is that of Plakophilin-3 (PKP3) from Homo sapiens (Human).